A 728-amino-acid polypeptide reads, in one-letter code: Ankyrin repeat protein A (728 aa).

ANK repeat units follow at residues 381-410 (INLP…ETGY), 429-458 (NGFS…KLAA), 477-506 (TSSH…LLIR), 525-554 (YGCP…SLAQ), and 573-602 (ARDT…TLFN).

This sequence belongs to the Toxin_15 family.

The sequence is that of Ankyrin repeat protein A (arpA) from Escherichia coli (strain K12).